We begin with the raw amino-acid sequence, 250 residues long: Ubiquinone/menaquinone biosynthesis C-methyltransferase UbiE (250 aa).

Residues T73, D94, 122-123 (NA), and S139 each bind S-adenosyl-L-methionine.

Belongs to the class I-like SAM-binding methyltransferase superfamily. MenG/UbiE family.

It carries out the reaction a 2-demethylmenaquinol + S-adenosyl-L-methionine = a menaquinol + S-adenosyl-L-homocysteine + H(+). The enzyme catalyses a 2-methoxy-6-(all-trans-polyprenyl)benzene-1,4-diol + S-adenosyl-L-methionine = a 5-methoxy-2-methyl-3-(all-trans-polyprenyl)benzene-1,4-diol + S-adenosyl-L-homocysteine + H(+). The protein operates within quinol/quinone metabolism; menaquinone biosynthesis; menaquinol from 1,4-dihydroxy-2-naphthoate: step 2/2. It functions in the pathway cofactor biosynthesis; ubiquinone biosynthesis. Its function is as follows. Methyltransferase required for the conversion of demethylmenaquinol (DMKH2) to menaquinol (MKH2) and the conversion of 2-polyprenyl-6-methoxy-1,4-benzoquinol (DDMQH2) to 2-polyprenyl-3-methyl-6-methoxy-1,4-benzoquinol (DMQH2). The chain is Ubiquinone/menaquinone biosynthesis C-methyltransferase UbiE from Francisella tularensis subsp. novicida (strain U112).